A 4545-amino-acid chain; its full sequence is Prolow-density lipoprotein receptor-related protein 1 (4545 aa).

Residues 1–19 form the signal peptide; that stretch reads MLTPPLLLLLPLLSALVAG. Topologically, residues 20–4424 are extracellular; that stretch reads ATMDAPKTCS…SQQQPGHMTS (4405 aa). LDL-receptor class A domains are found at residues 27–66 and 72–110; these read TCSP…EICP and RCPP…AHCR. 6 cysteine pairs are disulfide-bonded: C28-C41, C35-C54, C48-C65, C73-C86, C80-C99, and C93-C109. N-linked (GlcNAc...) asparagine glycans are attached at residues N115, N137, N186, N240, and N275. LDL-receptor class B repeat units follow at residues 293–335, 336–379, and 380–423; these read GNFY…DPAM, GKVF…DLVS, and RLVY…FENY. N358 is a glycosylation site (N-linked (GlcNAc...) asparagine). N447 is a glycosylation site (N-linked (GlcNAc...) asparagine). LDL-receptor class B repeat units lie at residues 572-614, 615-660, 661-711, and 712-755; these read GFIY…DWMG, DNLY…DPLN, GWMY…DIPA, and GRLY…HGNY. An HAT 1 repeat occupies 639–671; that stretch reads TRKTLIEGKMTHPRAIVVDPLNGWMYWTDWEED. N-linked (GlcNAc...) asparagine glycosylation is present at N730. LDL-receptor class A domains follow at residues 854-892, 895-933, 936-973, 976-1013, 1015-1053, 1062-1099, 1104-1142, and 1145-1184; these read QCQP…ALCH, TCPS…ATCS, TCPP…ASCA, TCFP…AGCS, SCSS…ANCT, GCHS…KGCE, VCDP…ENCE, and ACRP…ELCD. Disulfide bonds link C855–C867, C862–C880, C874–C891, C896–C908, C903–C921, C915–C932, C937–C949, C944–C962, C956–C972, C977–C990, C985–C1003, C997–C1012, C1016–C1028, C1023–C1041, C1035–C1052, C1063–C1076, C1070–C1089, C1083–C1098, C1105–C1119, C1113–C1132, C1126–C1141, C1146–C1160, C1153–C1173, and C1167–C1183. W872, D875, D877, D879, D885, and E886 together coordinate Ca(2+). An N-linked (GlcNAc...) asparagine glycan is attached at N929. The Ca(2+) site is built by W1033, D1036, D1038, D1040, D1046, and E1047. N-linked (GlcNAc...) asparagine glycosylation is present at N1051. Ca(2+) contacts are provided by W1081, D1084, D1086, D1088, D1094, and E1095. N-linked (GlcNAc...) asparagine glycosylation occurs at N1156. 2 N-linked (GlcNAc...) asparagine glycosylation sites follow: N1196 and N1219. LDL-receptor class B repeat units lie at residues 1310–1356, 1357–1399, 1400–1446, 1447–1491, and 1492–1532; these read SALY…DWIA, GNIY…DPRD, GILF…DYLE, KRIL…YGGE, and VYWT…YHPS. HAT repeat units follow at residues 1380-1413 and 1470-1503; these read TTLL…SLPR and MEVL…NTLA. N-linked (GlcNAc...) asparagine glycosylation is found at N1512, N1559, N1576, N1617, and N1646. 4 LDL-receptor class B repeats span residues 1628 to 1670, 1671 to 1714, 1715 to 1754, and 1755 to 1799; these read QRVY…DWVS, RNLF…HPLR, GKLY…DFPE, and SKLY…MGDK. An HAT 4 repeat occupies 1653–1684; the sequence is VVSADLPNAHGLAVDWVSRNLFWTSYDTNKKQ. N-linked (GlcNAc...) asparagine glycosylation is found at N1724, N1734, N1764, N1826, and N1934. 4 LDL-receptor class B repeats span residues 1935-1977, 1978-2020, 2021-2064, and 2065-2108; these read DTIY…DWIA, GNIY…HPEK, GYLF…DYQG, and GKLY…FEDF. Residue N1996 is glycosylated (N-linked (GlcNAc...) asparagine). At K2010 the chain carries N6-acetyllysine. The N-linked (GlcNAc...) asparagine glycan is linked to N2049. N-linked (GlcNAc...) asparagine glycans are attached at residues N2118 and N2128. LDL-receptor class B repeat units lie at residues 2254–2295, 2296–2344, 2345–2389, 2390–2432, and 2433–2474; these read NRIF…HRGW, DTLY…DECQ, NLMF…DHRA, EKLY…YGEH, and IFWT…VAND. 3 HAT repeats span residues 2277-2309, 2325-2358, and 2411-2444; these read TTIV…STIT, TVIT…LHPS, and HRYV…RAVQ. N-linked (GlcNAc...) asparagine glycosylation is found at N2473, N2503, and N2522. LDL-receptor class A domains follow at residues 2524 to 2563, 2566 to 2602, 2605 to 2641, 2639 to 2690, 2696 to 2732, 2734 to 2771, and 2774 to 2814; these read SCRA…SYCN, RCKK…IPCN, ACGV…MNCS, NCSA…RDCP, RCPL…THCN, FCSE…AHCE, and TCGP…AGCL. 6 disulfides stabilise this stretch: C2525/C2538, C2533/C2551, C2545/C2562, C2567/C2579, C2574/C2592, and C2586/C2601. Residue N2602 is glycosylated (N-linked (GlcNAc...) asparagine). Intrachain disulfides connect C2606–C2618, C2613–C2631, C2625–C2640, C2640–C2667, C2645–C2680, C2674–C2689, C2697–C2709, C2704–C2722, C2716–C2731, C2735–C2747, C2742–C2760, C2754–C2770, C2775–C2788, C2782–C2801, and C2795–C2813. 2 N-linked (GlcNAc...) asparagine glycosylation sites follow: N2621 and N2639. N-linked (GlcNAc...) asparagine glycosylation is present at N2816. LDL-receptor class A domains lie at 2818–2855, 2858–2899, and 2904–2941; these read TCDD…PECE, TCGP…PHCT, and KCNA…RGCH. Disulfide bonds link C2819–C2831, C2826–C2844, C2838–C2854, C2859–C2871, C2866–C2885, C2879–C2898, C2905–C2918, C2913–C2931, C2925–C2940, C2987–C2997, and C2993–C3006. N-linked (GlcNAc...) asparagine glycosylation occurs at N2906. In terms of domain architecture, EGF-like 1; calcium-binding spans 2983–3018; it reads DVDECSTTFPCSQLCINTHGSYKCLCVEGYAPRGGD. N-linked (GlcNAc...) asparagine glycans are attached at residues N3049 and N3090. LDL-receptor class B repeat units follow at residues 3070–3114, 3115–3157, 3158–3201, 3202–3244, and 3245–3285; these read QMIY…DWVG, GNLY…DVQN, GYLY…DYVT, ERIY…FEDY, and VYWT…FHAL. 2 HAT repeats span residues 3128–3171 and 3224–3256; these read EVSK…HSLI and RHVV…KSIN. N3265 and N3334 each carry an N-linked (GlcNAc...) asparagine glycan. 11 LDL-receptor class A domains span residues 3334-3371, 3374-3410, 3413-3450, 3453-3491, 3494-3533, 3536-3572, 3575-3611, 3613-3649, 3654-3692, 3695-3733, and 3741-3778; these read NCTA…PDCP, KCRP…ANCD, VCLP…RDCP, TCAP…ANCT, TCGV…EECD, TCEP…ESCT, PCSE…KDCT, RCDM…EACG, TCPL…EECT, QCPP…EDCE, and HCKD…EDCS. Cystine bridges form between C3335/C3347, C3342/C3360, C3354/C3370, C3375/C3387, C3382/C3400, C3394/C3409, C3414/C3427, C3421/C3440, C3434/C3449, C3454/C3467, C3461/C3480, C3474/C3490, C3495/C3508, C3502/C3521, C3515/C3532, C3537/C3549, C3544/C3562, C3556/C3571, C3576/C3588, C3583/C3601, C3595/C3610, C3614/C3626, C3621/C3639, C3633/C3648, C3655/C3667, C3662/C3680, C3674/C3691, C3696/C3710, C3704/C3723, C3717/C3732, C3742/C3755, C3750/C3768, and C3762/C3777. N-linked (GlcNAc...) asparagine glycosylation occurs at N3489. N-linked (GlcNAc...) asparagine glycosylation is present at N3663. N3789 and N3840 each carry an N-linked (GlcNAc...) asparagine glycan. The stretch at 3913 to 3925 is one LDL-receptor class B 31 repeat; it reads GRVYWTNWHTGTI. N3954 carries N-linked (GlcNAc...) asparagine glycosylation. LDL-receptor class B repeat units follow at residues 3971–4013, 4014–4057, and 4058–4102; these read GNVY…DPLR, GTMY…DYHN, and ERLY…FEDY. One copy of the HAT 10 repeat lies at 3995–4027; sequence TLISGMIDEPHAIVVDPLRGTMYWSDWGNHPKI. N-linked (GlcNAc...) asparagine glycans are attached at residues N4076, N4126, and N4180. 4 EGF-like domains span residues 4197–4230, 4233–4269, 4270–4302, and 4305–4341; these read RPGT…YTGD, ELDQ…PRCT, QQVC…FLGD, and QYRQ…TRCE. Cystine bridges form between C4201–C4211, C4205–C4221, C4237–C4247, C4241–C4257, C4259–C4268, C4273–C4283, C4277–C4293, C4309–C4319, C4313–C4329, and C4331–C4340. N4280 is a glycosylation site (N-linked (GlcNAc...) asparagine). N-linked (GlcNAc...) asparagine glycosylation occurs at N4365. Positions 4376-4410 constitute an EGF-like 6 domain; that stretch reads LTCIDHCSNGGSCTMNSKMMPECQCPPHMTGPRCE. Disulfide bonds link C4378–C4388, C4382–C4398, and C4400–C4409. Residues 4425–4445 traverse the membrane as a helical segment; it reads ILIPLLLLLLLLLVAGVVFWY. Residues 4446–4545 are Cytoplasmic-facing; it reads KRRVRGAKGF…PEDEIGDPLA (100 aa). Residues 4446 to 4545 are interaction with MAFB; the sequence is KRRVRGAKGF…PEDEIGDPLA (100 aa). T4461 carries the phosphothreonine modification. A Phosphotyrosine modification is found at Y4508. Phosphoserine occurs at positions 4518, 4521, and 4524.

Belongs to the LDLR family. In terms of assembly, heterodimer of an 85-kDa membrane-bound carboxyl subunit and a non-covalently attached 515-kDa N-terminal subunit. Intracellular domain interacts with MAFB. Found in a complex with PID1/PCLI1, LRP1 and CUBNI. Interacts with SNX17, PID1/PCLI1, PDGF and CUBN. The intracellular domain interacts with SHC1, GULP1 and DAB1. Can weakly interact (via NPXY motif) with DAB2 (via PID domain); the interaction is enhanced by tyrosine phosphorylation of the NPXY motif. Interacts with MDK; promotes neuronal survival. Interacts with LRPAP1; this interaction is followed by rapid internalization. Interacts with uPA/PLAU and PAI1/SERPINE1, either individually or in complex with each other, leading to rapid endocytosis; this interaction is abolished in the presence of LRPAP1/RAP. Also interacts with tPA/PLAT alone or in complex with SERPINE1. Interacts with the urokinase receptor PLAUR; this interaction leads to PLAUR internalization and is impaired in the presence of SORL1. Interacts with PDGFB. Interacts with TAU/MAPT, leading to endocytosis; this interaction is reduced in the presence of LRPAP1/RAP. Interacts with IGFBP3. Interacts with ADGRG6. Cleaved into a 85 kDa membrane-spanning subunit (LRP-85) and a 515 kDa large extracellular domain (LRP-515) that remains non-covalently associated. Gamma-secretase-dependent cleavage of LRP-85 releases the intracellular domain from the membrane. Post-translationally, phosphorylated on serine and threonine residues. In terms of processing, phosphorylated on tyrosine residues upon stimulation with PDGF. Tyrosine phosphorylation promotes interaction with SHC1.

It localises to the cell membrane. The protein localises to the membrane. Its subcellular location is the coated pit. The protein resides in the golgi outpost. It is found in the cytoplasm. It localises to the cytoskeleton. The protein localises to the microtubule organizing center. Its subcellular location is the nucleus. Endocytic receptor involved in endocytosis and in phagocytosis of apoptotic cells. Required for early embryonic development. Involved in cellular lipid homeostasis. Involved in the plasma clearance of chylomicron remnants and activated LRPAP1 (alpha 2-macroglobulin), as well as the local metabolism of complexes between plasminogen activators and their endogenous inhibitors. Acts as an LRPAP1 alpha-2-macroglobulin receptor. Acts as a TAU/MAPT receptor and controls the endocytosis of TAU/MAPT as well as its subsequent spread. May modulate cellular events, such as APP metabolism, kinase-dependent intracellular signaling, neuronal calcium signaling as well as neurotransmission. Also acts as a receptor for IGFBP3 to mediate cell growth inhibition. The sequence is that of Prolow-density lipoprotein receptor-related protein 1 from Rattus norvegicus (Rat).